Consider the following 541-residue polypeptide: Chaperonin GroEL 2 (541 aa).

ATP-binding positions include 30–33 (TLGP), Lys51, 87–91 (DGTTT), Gly414, and Asp495.

The protein belongs to the chaperonin (HSP60) family. In terms of assembly, forms a cylinder of 14 subunits composed of two heptameric rings stacked back-to-back. Interacts with the co-chaperonin GroES.

The protein resides in the cytoplasm. The catalysed reaction is ATP + H2O + a folded polypeptide = ADP + phosphate + an unfolded polypeptide.. Functionally, together with its co-chaperonin GroES, plays an essential role in assisting protein folding. The GroEL-GroES system forms a nano-cage that allows encapsulation of the non-native substrate proteins and provides a physical environment optimized to promote and accelerate protein folding. The sequence is that of Chaperonin GroEL 2 from Cereibacter sphaeroides (Rhodobacter sphaeroides).